Here is a 265-residue protein sequence, read N- to C-terminus: 14-3-3-like protein GF14 nu (265 aa).

3 positions are modified to phosphoserine: S67, S109, and S190. Phosphothreonine is present on T211. Residues 242–265 (AGGDEIKEASKHEPEEGKPAETGQ) are disordered. Residues 245–265 (DEIKEASKHEPEEGKPAETGQ) show a composition bias toward basic and acidic residues.

This sequence belongs to the 14-3-3 family. As to quaternary structure, component of the SERK1 signaling complex, composed of KAPP, CDC48A, GRF6 or GRF7, SERK1, SERK2, SERK3/BAK1 and BRI1. Interacts with DREB1A and DREB1B in the nucleus. Interacts with CINV1.

The protein localises to the nucleus. It is found in the cytoplasm. Is associated with a DNA binding complex that binds to the G box, a well-characterized cis-acting DNA regulatory element found in plant genes. The protein is 14-3-3-like protein GF14 nu (GRF7) of Arabidopsis thaliana (Mouse-ear cress).